A 716-amino-acid chain; its full sequence is Exocyst complex component 8 (716 aa).

Residue S15 is modified to Phosphoserine. The segment covering 110–119 (STGEDTAGAG) has biased composition (low complexity). The disordered stretch occupies residues 110-149 (STGEDTAGAGPRERGAAQAGFLPGPAGVPREGPGTGEEGK). One can recognise a PH domain in the interval 173 to 273 (YLVYNGDLVE…WLEVLEETKR (101 aa)). Residues 275-284 (LSDKRRREQE) show a composition bias toward basic and acidic residues. A disordered region spans residues 275–319 (LSDKRRREQEEAAALRAPPPVTSKGSNPFEDEAEEELATPEAEEE). Positions 303–319 (FEDEAEEELATPEAEEE) are enriched in acidic residues. At T313 the chain carries Phosphothreonine.

This sequence belongs to the EXO84 family. As to quaternary structure, the exocyst complex is composed of EXOC1, EXOC2, EXOC3, EXOC4, EXOC5, EXOC6, EXOC7 and EXOC8. Interacts (via PH domain) with GTP-bound RALA and RALB. Interacts with SH3BP1; required for the localization of both SH3BP1 and the exocyst to the leading edge of migrating cells.

The protein resides in the cytoplasm. It localises to the perinuclear region. Its subcellular location is the cell projection. It is found in the growth cone. Functionally, component of the exocyst complex involved in the docking of exocytic vesicles with fusion sites on the plasma membrane. This chain is Exocyst complex component 8 (Exoc8), found in Rattus norvegicus (Rat).